Reading from the N-terminus, the 122-residue chain is Large ribosomal subunit protein uL14 (122 aa).

It belongs to the universal ribosomal protein uL14 family. In terms of assembly, part of the 50S ribosomal subunit. Forms a cluster with proteins L3 and L19. In the 70S ribosome, L14 and L19 interact and together make contacts with the 16S rRNA in bridges B5 and B8.

Functionally, binds to 23S rRNA. Forms part of two intersubunit bridges in the 70S ribosome. This chain is Large ribosomal subunit protein uL14, found in Gemmatimonas aurantiaca (strain DSM 14586 / JCM 11422 / NBRC 100505 / T-27).